Consider the following 298-residue polypeptide: 4-hydroxy-tetrahydrodipicolinate synthase (298 aa).

Residue Thr51 participates in pyruvate binding. Residue Tyr139 is the Proton donor/acceptor of the active site. Lys167 serves as the catalytic Schiff-base intermediate with substrate. Ile209 contributes to the pyruvate binding site.

Belongs to the DapA family. Homotetramer; dimer of dimers.

The protein localises to the cytoplasm. The enzyme catalyses L-aspartate 4-semialdehyde + pyruvate = (2S,4S)-4-hydroxy-2,3,4,5-tetrahydrodipicolinate + H2O + H(+). Its pathway is amino-acid biosynthesis; L-lysine biosynthesis via DAP pathway; (S)-tetrahydrodipicolinate from L-aspartate: step 3/4. In terms of biological role, catalyzes the condensation of (S)-aspartate-beta-semialdehyde [(S)-ASA] and pyruvate to 4-hydroxy-tetrahydrodipicolinate (HTPA). This chain is 4-hydroxy-tetrahydrodipicolinate synthase, found in Haemophilus influenzae (strain 86-028NP).